The sequence spans 382 residues: Dual-specificity RNA methyltransferase RlmN (382 aa).

Glu95 functions as the Proton acceptor in the catalytic mechanism. A Radical SAM core domain is found at 101–348; the sequence is EDDRGTLCIS…TTVRKTRGDD (248 aa). Cysteines 108 and 353 form a disulfide. [4Fe-4S] cluster is bound by residues Cys115, Cys119, and Cys122. Residues 179-180, Ser211, 233-235, and Asn310 contribute to the S-adenosyl-L-methionine site; these read GE and SLH. Cys353 serves as the catalytic S-methylcysteine intermediate.

The protein belongs to the radical SAM superfamily. RlmN family. The cofactor is [4Fe-4S] cluster.

It is found in the cytoplasm. The catalysed reaction is adenosine(2503) in 23S rRNA + 2 reduced [2Fe-2S]-[ferredoxin] + 2 S-adenosyl-L-methionine = 2-methyladenosine(2503) in 23S rRNA + 5'-deoxyadenosine + L-methionine + 2 oxidized [2Fe-2S]-[ferredoxin] + S-adenosyl-L-homocysteine. It catalyses the reaction adenosine(37) in tRNA + 2 reduced [2Fe-2S]-[ferredoxin] + 2 S-adenosyl-L-methionine = 2-methyladenosine(37) in tRNA + 5'-deoxyadenosine + L-methionine + 2 oxidized [2Fe-2S]-[ferredoxin] + S-adenosyl-L-homocysteine. Specifically methylates position 2 of adenine 2503 in 23S rRNA and position 2 of adenine 37 in tRNAs. m2A2503 modification seems to play a crucial role in the proofreading step occurring at the peptidyl transferase center and thus would serve to optimize ribosomal fidelity. The protein is Dual-specificity RNA methyltransferase RlmN of Bordetella pertussis (strain Tohama I / ATCC BAA-589 / NCTC 13251).